Here is a 348-residue protein sequence, read N- to C-terminus: UPF0283 membrane protein PMI1371 (348 aa).

Transmembrane regions (helical) follow at residues 69 to 89 (LITVASTILGVSVIAQAGQWI) and 99 to 119 (IALGAASAGGLIVIAGMGSVI).

Belongs to the UPF0283 family.

Its subcellular location is the cell inner membrane. The sequence is that of UPF0283 membrane protein PMI1371 from Proteus mirabilis (strain HI4320).